Reading from the N-terminus, the 329-residue chain is Peroxidase 56 (329 aa).

Positions 1–31 (MAALKMTISCFLFLQVIYCLLSSFAPTNVQG) are cleaved as a signal peptide. 4 disulfide bridges follow: Cys41–Cys119, Cys74–Cys79, Cys125–Cys325, and Cys204–Cys236. His72 functions as the Proton acceptor in the catalytic mechanism. Asp73, Val76, Gly78, Glu80, and Ser82 together coordinate Ca(2+). N-linked (GlcNAc...) asparagine glycosylation occurs at Asn158. Substrate is bound at residue Pro167. Asn172 carries an N-linked (GlcNAc...) asparagine glycan. Residue His197 coordinates heme b. Thr198 lines the Ca(2+) pocket. The N-linked (GlcNAc...) asparagine glycan is linked to Asn213. Residues Asp248, Ser251, and Asp256 each coordinate Ca(2+).

It belongs to the peroxidase family. Classical plant (class III) peroxidase subfamily. Heme b serves as cofactor. Requires Ca(2+) as cofactor.

The protein resides in the secreted. The enzyme catalyses 2 a phenolic donor + H2O2 = 2 a phenolic radical donor + 2 H2O. Functionally, removal of H(2)O(2), oxidation of toxic reductants, biosynthesis and degradation of lignin, suberization, auxin catabolism, response to environmental stresses such as wounding, pathogen attack and oxidative stress. These functions might be dependent on each isozyme/isoform in each plant tissue. The protein is Peroxidase 56 (PER56) of Arabidopsis thaliana (Mouse-ear cress).